A 380-amino-acid chain; its full sequence is Putative glutamate--cysteine ligase 2 (380 aa).

The protein belongs to the glutamate--cysteine ligase type 2 family. YbdK subfamily.

It carries out the reaction L-cysteine + L-glutamate + ATP = gamma-L-glutamyl-L-cysteine + ADP + phosphate + H(+). ATP-dependent carboxylate-amine ligase which exhibits weak glutamate--cysteine ligase activity. The sequence is that of Putative glutamate--cysteine ligase 2 from Pseudomonas entomophila (strain L48).